We begin with the raw amino-acid sequence, 671 residues long: Pescadillo homolog (671 aa).

Coiled-coil stretches lie at residues 294-323 and 548-584; these read NQAQ…ELFR and QALR…TRKM. The 87-residue stretch at 317–403 folds into the BRCT domain; it reads KVRELFRGLT…LVLPVTGYRI (87 aa). Disordered regions lie at residues 552 to 577 and 634 to 671; these read KAQE…VKRQ and GLVN…KWVQ. The span at 634–651 shows a compositional bias: basic and acidic residues; that stretch reads GLVNKRLEARRQRAEAKG.

The protein belongs to the pescadillo family.

Its subcellular location is the nucleus. The protein resides in the nucleolus. It is found in the nucleoplasm. Its function is as follows. Required for maturation of ribosomal RNAs and formation of the large ribosomal subunit. This chain is Pescadillo homolog, found in Leishmania major.